A 143-amino-acid chain; its full sequence is Probable cyclic pyranopterin monophosphate synthase (143 aa).

Residues 61–63 and 97–98 each bind substrate; these read MCH and ME. D112 is an active-site residue.

The protein belongs to the MoaC family. In terms of assembly, homohexamer; trimer of dimers.

It catalyses the reaction (8S)-3',8-cyclo-7,8-dihydroguanosine 5'-triphosphate = cyclic pyranopterin phosphate + diphosphate. The protein operates within cofactor biosynthesis; molybdopterin biosynthesis. Catalyzes the conversion of (8S)-3',8-cyclo-7,8-dihydroguanosine 5'-triphosphate to cyclic pyranopterin monophosphate (cPMP). The sequence is that of Probable cyclic pyranopterin monophosphate synthase from Sulfolobus acidocaldarius (strain ATCC 33909 / DSM 639 / JCM 8929 / NBRC 15157 / NCIMB 11770).